A 391-amino-acid chain; its full sequence is Coproporphyrin III ferrochelatase (391 aa).

2 residues coordinate Fe-coproporphyrin III: Ser79 and Tyr148. Fe(2+) contacts are provided by His211 and Glu305.

Belongs to the ferrochelatase family.

Its subcellular location is the cytoplasm. The enzyme catalyses Fe-coproporphyrin III + 2 H(+) = coproporphyrin III + Fe(2+). Its pathway is porphyrin-containing compound metabolism; protoheme biosynthesis. Functionally, involved in coproporphyrin-dependent heme b biosynthesis. Catalyzes the insertion of ferrous iron into coproporphyrin III to form Fe-coproporphyrin III. This is Coproporphyrin III ferrochelatase from Tropheryma whipplei (strain TW08/27) (Whipple's bacillus).